Consider the following 160-residue polypeptide: Cytochrome b6-f complex subunit 4 (160 aa).

A run of 3 helical transmembrane segments spans residues 36 to 56, 95 to 115, and 131 to 151; these read LLYIFPVVILGTIACNVGLAV, LLGVFLMVSVPAGLLTVPFLE, and TVFLIGTAVALWLGIGATLPI.

Belongs to the cytochrome b family. PetD subfamily. As to quaternary structure, the 4 large subunits of the cytochrome b6-f complex are cytochrome b6, subunit IV (17 kDa polypeptide, petD), cytochrome f and the Rieske protein, while the 4 small subunits are petG, petL, petM and petN. The complex functions as a dimer.

It is found in the plastid. The protein resides in the chloroplast thylakoid membrane. Functionally, component of the cytochrome b6-f complex, which mediates electron transfer between photosystem II (PSII) and photosystem I (PSI), cyclic electron flow around PSI, and state transitions. The protein is Cytochrome b6-f complex subunit 4 of Gossypium barbadense (Sea Island cotton).